We begin with the raw amino-acid sequence, 92 residues long: Large ribosomal subunit protein eL43A (92 aa).

The segment at cysteine 39–cysteine 60 adopts a C4-type zinc-finger fold. At serine 40 the chain carries Phosphoserine.

This sequence belongs to the eukaryotic ribosomal protein eL43 family. In terms of assembly, component of the large ribosomal subunit (LSU). Mature yeast ribosomes consist of a small (40S) and a large (60S) subunit. The 40S small subunit contains 1 molecule of ribosomal RNA (18S rRNA) and 33 different proteins (encoded by 57 genes). The large 60S subunit contains 3 rRNA molecules (25S, 5.8S and 5S rRNA) and 46 different proteins (encoded by 81 genes).

The protein resides in the cytoplasm. Its function is as follows. Component of the ribosome, a large ribonucleoprotein complex responsible for the synthesis of proteins in the cell. The small ribosomal subunit (SSU) binds messenger RNAs (mRNAs) and translates the encoded message by selecting cognate aminoacyl-transfer RNA (tRNA) molecules. The large subunit (LSU) contains the ribosomal catalytic site termed the peptidyl transferase center (PTC), which catalyzes the formation of peptide bonds, thereby polymerizing the amino acids delivered by tRNAs into a polypeptide chain. The nascent polypeptides leave the ribosome through a tunnel in the LSU and interact with protein factors that function in enzymatic processing, targeting, and the membrane insertion of nascent chains at the exit of the ribosomal tunnel. This is Large ribosomal subunit protein eL43A from Saccharomyces cerevisiae (strain ATCC 204508 / S288c) (Baker's yeast).